A 2670-amino-acid chain; its full sequence is Inositol 1,4,5-trisphosphate-gated calcium channel ITPR3 (2670 aa).

Over 1–2201 the chain is Cytoplasmic; it reads MNEMSSFLHI…LIYWFSRRMT (2201 aa). 5 MIR domains span residues 113–173, 174–224, 232–288, 295–372, and 378–434; these read GDVV…LRSN, GDNV…INLF, EEVL…VEVV, GGAG…LDPT, and DSFV…IVSV. 1D-myo-inositol 1,4,5-trisphosphate is bound by residues Arg266, Thr268, Leu269, and Arg270. The disordered stretch occupies residues 321–344; it reads PSYKGDVSDPKAAGPGAQSRTGRR. Residues Arg503, Lys507, Arg510, Tyr567, Arg568, and Lys569 each coordinate 1D-myo-inositol 1,4,5-trisphosphate. Arg743 serves as a coordination point for Ca(2+). Ser916 and Ser934 each carry phosphoserine. Ca(2+)-binding residues include Glu1122 and Glu1125. Positions 1134–1153 are enriched in basic and acidic residues; sequence VKGEEGEAGASKDKKERPSD. 2 disordered regions span residues 1134–1164 and 1807–1849; these read VKGEEGEAGASKDKKERPSDEEGFLQPHGEK and NMSD…GLHR. Ser1813, Ser1832, and Ser1834 each carry phosphoserine. Over residues 1831–1842 the composition is skewed to low complexity; it reads SSFSMPSSSRYS. Glu1881 and Glu1945 together coordinate Ca(2+). The ATP site is built by Ala1995, Glu2148, and Lys2151. A helical membrane pass occupies residues 2202-2222; that stretch reads LWGSISFNLAVFINIIIAFFY. At 2223–2233 the chain is on the extracellular side; sequence PYVEGASTGVL. Residues 2234-2254 form a helical membrane-spanning segment; it reads GSPLISLLFWILICFSIAALF. The Cytoplasmic segment spans residues 2255 to 2263; the sequence is TKHYSVRPL. A helical transmembrane segment spans residues 2264 to 2284; it reads IVALVLRSIYYLGIGPTLNIL. Residues 2285 to 2324 are Extracellular-facing; that stretch reads GALNLTNKIVFVVSFVGNRGTFIRGYKAMVMDMEFLYHVG. A helical membrane pass occupies residues 2325-2345; it reads YILTSVLGLFAHELFYSILLF. At 2346-2367 the chain is on the cytoplasmic side; it reads DLIYREETLFNVIKSVTRNGRS. A helical transmembrane segment spans residues 2368–2388; the sequence is ILLTALLALILVYLFSIVGFL. Residues 2389–2495 lie on the Extracellular side of the membrane; sequence FLKDDFILEV…ESLFPARVVY (107 aa). Cys2454 and Cys2460 are disulfide-bonded. The chain crosses the membrane as a helical span at residues 2496-2516; that stretch reads DLLFFFIVIIIVLNLIFGVII. Over 2517 to 2670 the chain is Cytoplasmic; the sequence is DTFADLRSEK…FVDVQNCMSR (154 aa). ATP-binding residues include Cys2537 and Phe2538. Residue Cys2537 participates in Zn(2+) binding. Zn(2+) contacts are provided by Cys2540 and His2557. 4 residues coordinate ATP: Lys2559, His2562, Asn2563, and Met2564. Zn(2+) is bound at residue His2562. Position 2580 (Thr2580) interacts with Ca(2+). 2 positions are modified to phosphoserine: Ser2608 and Ser2669.

Belongs to the InsP3 receptor family. In terms of assembly, homotetramer. Homodimer. Interacts with TRPC1 and TRPC3. Interacts with TRPC4. Interacts with TRPV4. Interacts with SIGMAR1. Interacts with AKT1 and PML. Interacts with IRAG2 (via coiled-coil domain). Interacts with CABP1. Interacts with TMBIM4/LFG4. Interacts with CEMIP. Interacts with TESPA1. Interacts with TMEM203. Interacts with BOK; regulates ITPR3 expression. Interacts with BCL2L10. Interacts with CHGA and CHGB. Phosphorylated by AKT1 on serine and/or threonine residues.

It is found in the endoplasmic reticulum membrane. The protein resides in the cytoplasmic vesicle. It localises to the secretory vesicle membrane. It catalyses the reaction Ca(2+)(in) = Ca(2+)(out). With respect to regulation, inositol 1,4,5-trisphosphate-gated calcium channel is regulated by cytosolic calcium in a biphasic manner. At low concentrations, cytosolic calcium binds at a high-affinity juxtamembrane domain (JD) calcium binding site, allowing ITPR3 to activate by escaping a low-energy resting state through an ensemble of preactivated states. At high cytosolic calcium concentrations, ITPR3 preferentially enters an inhibited state stabilized by calcium binding at a second, low-affinity cytoplasmic domain (CD) calcium binding site. Functionally, inositol 1,4,5-trisphosphate-gated calcium channel that, upon 1D-myo-inositol 1,4,5-trisphosphate binding, transports calcium from the endoplasmic reticulum lumen to cytoplasm, thus releasing the intracellular calcium and therefore participates in cellular calcium ion homeostasis. 11D-myo-inositol 1,4,5-trisphosphate binds to the ligand-free channel without altering its global conformation, yielding the low-energy resting state, then progresses through resting-to preactivated transitions to the higher energy preactivated state, which increases affinity for calcium, promoting binding of the low basal cytosolic calcium at the juxtamembrane domain (JD) site, favoring the transition through the ensemble of high-energy intermediate states along the trajectory to the fully-open activated state. Upon opening, releases calcium in the cytosol where it can bind to the low-affinity cytoplasmic domain (CD) site and stabilizes the inhibited state to terminate calcium release. This Rattus norvegicus (Rat) protein is Inositol 1,4,5-trisphosphate-gated calcium channel ITPR3.